The sequence spans 189 residues: Lumazine protein (189 aa).

2 Lumazine-binding repeats span residues 1 to 96 (MFKG…LGKG) and 97 to 189 (ALTG…SNEW).

6,7-dimethyl-8-(1-D-ribityl)lumazine is required as a cofactor.

Functionally, antenna protein that modulates the color of the bioluminescence emission of the luciferase. In the presence of LumP, luciferase emission is shifted to higher energy values (shorter wavelength). This Photobacterium phosphoreum protein is Lumazine protein (luxL).